Consider the following 262-residue polypeptide: Adenosylcobinamide-GDP ribazoletransferase (262 aa).

Helical transmembrane passes span tyrosine 43–glutamine 63, leucine 66–phenylalanine 86, glycine 120–leucine 140, alanine 146–phenylalanine 166, leucine 191–leucine 211, and alanine 242–leucine 262.

It belongs to the CobS family. It depends on Mg(2+) as a cofactor.

It is found in the cell inner membrane. The catalysed reaction is alpha-ribazole + adenosylcob(III)inamide-GDP = adenosylcob(III)alamin + GMP + H(+). It catalyses the reaction alpha-ribazole 5'-phosphate + adenosylcob(III)inamide-GDP = adenosylcob(III)alamin 5'-phosphate + GMP + H(+). It functions in the pathway cofactor biosynthesis; adenosylcobalamin biosynthesis; adenosylcobalamin from cob(II)yrinate a,c-diamide: step 7/7. Its function is as follows. Joins adenosylcobinamide-GDP and alpha-ribazole to generate adenosylcobalamin (Ado-cobalamin). Also synthesizes adenosylcobalamin 5'-phosphate from adenosylcobinamide-GDP and alpha-ribazole 5'-phosphate. This Shewanella sp. (strain ANA-3) protein is Adenosylcobinamide-GDP ribazoletransferase.